A 490-amino-acid chain; its full sequence is Cobyric acid synthase (490 aa).

One can recognise a GATase cobBQ-type domain in the interval 252–439 (RLKVVVPVLP…LHGLFESTAA (188 aa)). C333 acts as the Nucleophile in catalysis. H431 is an active-site residue.

The protein belongs to the CobB/CobQ family. CobQ subfamily.

The protein operates within cofactor biosynthesis; adenosylcobalamin biosynthesis. Its function is as follows. Catalyzes amidations at positions B, D, E, and G on adenosylcobyrinic A,C-diamide. NH(2) groups are provided by glutamine, and one molecule of ATP is hydrogenolyzed for each amidation. This Pseudomonas aeruginosa (strain LESB58) protein is Cobyric acid synthase.